The chain runs to 436 residues: Ribosome biogenesis protein WDR12 homolog (436 aa).

Residues 13 to 97 (VRVRFLTKLP…ERVLELEYVK (85 aa)) form a ubiquitin-like (UBL) domain region. WD repeat units follow at residues 109 to 147 (PHDD…THIL), 149 to 193 (GHSD…SVPK), 203 to 242 (GHTS…EDGD), 273 to 311 (GHTQ…ETWN), 313 to 353 (VSGK…TLAP), 359 to 399 (SHKS…PLAS), and 402 to 436 (SHKD…IEIV). The segment at 240–262 (DGDTVSVKKRRTNSDSSGPEESL) is disordered.

This sequence belongs to the WD repeat WDR12/YTM1 family.

It is found in the nucleus. Its subcellular location is the nucleolus. The protein resides in the nucleoplasm. Required for maturation of ribosomal RNAs and formation of the large ribosomal subunit. This chain is Ribosome biogenesis protein WDR12 homolog, found in Oryza sativa subsp. japonica (Rice).